Reading from the N-terminus, the 149-residue chain is Transcription antitermination protein NusB (149 aa).

This sequence belongs to the NusB family.

Its function is as follows. Involved in transcription antitermination. Required for transcription of ribosomal RNA (rRNA) genes. Binds specifically to the boxA antiterminator sequence of the ribosomal RNA (rrn) operons. The sequence is that of Transcription antitermination protein NusB from Caulobacter vibrioides (strain ATCC 19089 / CIP 103742 / CB 15) (Caulobacter crescentus).